Consider the following 1907-residue polypeptide: Receptor-type tyrosine-protein phosphatase S (1907 aa).

An N-terminal signal peptide occupies residues M1 to A29. At E30–G1257 the chain is on the extracellular side. 3 Ig-like C2-type domains span residues P33–T123, P135–Y224, and P232–T314. 2 disulfide bridges follow: C54/C107 and C156/C207. The interval K68–K72 is important for binding to glycosaminoglycan chains. Residues N250 and N295 are each glycosylated (N-linked (GlcNAc...) asparagine). An intrachain disulfide couples C253 to C298. Fibronectin type-III domains lie at A321–Q411, A416–G510, Q514–A603, P608–D705, P710–A809, V810–G906, F907–D1008, and S1011–N1095. Low complexity predominate over residues P691–V700. The interval P691 to P711 is disordered. N720 carries an N-linked (GlcNAc...) asparagine glycan. Residue N916 is glycosylated (N-linked (GlcNAc...) asparagine). A helical transmembrane segment spans residues L1258–I1278. Residues L1279 to T1907 are Cytoplasmic-facing. Residues D1286 to T1296 show a composition bias toward basic and acidic residues. The disordered stretch occupies residues D1286 to P1313. 2 Tyrosine-protein phosphatase domains span residues L1352–A1607 and M1639–Y1898. Substrate contacts are provided by residues D1516, C1548 to R1554, and Q1592. Catalysis depends on C1548, which acts as the Phosphocysteine intermediate. The active-site Phosphocysteine intermediate is C1839.

The protein belongs to the protein-tyrosine phosphatase family. Receptor class 2A subfamily. In terms of assembly, binding to large heparan sulfate proteoglycan structures promotes oligomerization. Binding to chondroitin sulfate proteoglycan does not lead to oligomerization. Interacts (via Ig-like domains) with NTRK1 and NTRK3, but does not form detectable complexes with NTRK2. Interacts with PPFIA1, PPFIA2 and PPFIA3. Post-translationally, a cleavage occurs, separating the extracellular domain from the transmembrane segment. This process called 'ectodomain shedding' is thought to be involved in receptor desensitization, signal transduction and/or membrane localization. In terms of tissue distribution, detected in brain neocortex (at protein level). Detected in heart, testis and liver. Detected at lower levels in skeletal muscle, brain, spleen and kidney.

It is found in the cell membrane. The protein localises to the cell projection. Its subcellular location is the axon. The protein resides in the perikaryon. It localises to the cytoplasmic vesicle. It is found in the secretory vesicle. The protein localises to the synaptic vesicle membrane. Its subcellular location is the synapse. The protein resides in the synaptosome. It localises to the postsynaptic density. It is found in the neuron projection. The protein localises to the growth cone. It catalyses the reaction O-phospho-L-tyrosyl-[protein] + H2O = L-tyrosyl-[protein] + phosphate. In terms of biological role, cell surface receptor that binds to glycosaminoglycans, including chondroitin sulfate proteoglycans and heparan sulfate proteoglycans. Binding to chondroitin sulfate and heparan sulfate proteoglycans has opposite effects on PTPRS oligomerization and regulation of neurite outgrowth. Contributes to the inhibition of neurite and axonal outgrowth by chondroitin sulfate proteoglycans, also after nerve transection. Plays a role in stimulating neurite outgrowth in response to the heparan sulfate proteoglycan GPC2. Required for normal brain development, especially for normal development of the pituitary gland and the olfactory bulb. Functions as tyrosine phosphatase. Mediates dephosphorylation of NTRK1, NTRK2 and NTRK3. Plays a role in down-regulation of signaling cascades that lead to the activation of Akt and MAP kinases. Down-regulates TLR9-mediated activation of NF-kappa-B, as well as production of TNF, interferon alpha and interferon beta. The chain is Receptor-type tyrosine-protein phosphatase S (Ptprs) from Rattus norvegicus (Rat).